The sequence spans 276 residues: Dermonecrotic toxin LlSicTox-alphaIV1ii (276 aa).

Histidine 5 is an active-site residue. The Mg(2+) site is built by glutamate 25 and aspartate 27. The active-site Nucleophile is the histidine 41. Cystine bridges form between cysteine 45–cysteine 51 and cysteine 47–cysteine 193. Mg(2+) is bound at residue aspartate 85.

This sequence belongs to the arthropod phospholipase D family. Class II subfamily. Mg(2+) is required as a cofactor. In terms of tissue distribution, expressed by the venom gland.

The protein resides in the secreted. It carries out the reaction an N-(acyl)-sphingosylphosphocholine = an N-(acyl)-sphingosyl-1,3-cyclic phosphate + choline. The catalysed reaction is an N-(acyl)-sphingosylphosphoethanolamine = an N-(acyl)-sphingosyl-1,3-cyclic phosphate + ethanolamine. The enzyme catalyses a 1-acyl-sn-glycero-3-phosphocholine = a 1-acyl-sn-glycero-2,3-cyclic phosphate + choline. It catalyses the reaction a 1-acyl-sn-glycero-3-phosphoethanolamine = a 1-acyl-sn-glycero-2,3-cyclic phosphate + ethanolamine. Functionally, dermonecrotic toxins cleave the phosphodiester linkage between the phosphate and headgroup of certain phospholipids (sphingolipid and lysolipid substrates), forming an alcohol (often choline) and a cyclic phosphate. This toxin acts on sphingomyelin (SM). It may also act on ceramide phosphoethanolamine (CPE), lysophosphatidylcholine (LPC) and lysophosphatidylethanolamine (LPE), but not on lysophosphatidylserine (LPS), and lysophosphatidylglycerol (LPG). It acts by transphosphatidylation, releasing exclusively cyclic phosphate products as second products. Induces dermonecrosis, hemolysis, increased vascular permeability, edema, inflammatory response, and platelet aggregation. This chain is Dermonecrotic toxin LlSicTox-alphaIV1ii, found in Loxosceles laeta (South American recluse spider).